The primary structure comprises 625 residues: Chaperone protein HtpG (625 aa).

Positions 1-330 are a; substrate-binding; that stretch reads MAKQVQNFNA…SSDLSLNVSR (330 aa). Residues 331 to 545 form a b region; it reads ELLQQDRQVT…SADPSAHMQK (215 aa). The interval 546-625 is c; it reads LMAQMGKEYA…MVQAADSTKH (80 aa).

It belongs to the heat shock protein 90 family. Homodimer.

It is found in the cytoplasm. Functionally, molecular chaperone. Has ATPase activity. This is Chaperone protein HtpG from Bdellovibrio bacteriovorus (strain ATCC 15356 / DSM 50701 / NCIMB 9529 / HD100).